The sequence spans 588 residues: Calcium/calmodulin-dependent protein kinase kinase 2 (588 aa).

Residues 1–14 are compositionally biased toward polar residues; the sequence is MSSCVSSQPSSNRA. 2 disordered regions span residues 1–33 and 78–100; these read MSSC…SQKP and GQEV…RKLS. Ser2 is subject to N-acetylserine. Residues Ser100, Ser114, Ser129, Ser133, and Ser137 each carry the phosphoserine modification. Over residues 128–139 the composition is skewed to low complexity; that stretch reads YSPVSSPQSSPR. Residues 128–149 form a disordered region; the sequence is YSPVSSPQSSPRLPRRPTVESH. One can recognise a Protein kinase domain in the interval 165–446; it reads YTLKDEIGKG…VPEIKLHPWV (282 aa). Residues 171-179 and Lys194 each bind ATP; that span reads IGKGSYGVV. An RP domain region spans residues 204–226; that stretch reads QAGFPRRPPPRGTRPAPGGCIQP. The disordered stretch occupies residues 205-225; it reads AGFPRRPPPRGTRPAPGGCIQ. Asp312 acts as the Proton acceptor in catalysis. An autoinhibitory domain region spans residues 472 to 477; sequence ENSVKH. A calmodulin-binding region spans residues 475-500; the sequence is VKHIPSLATVILVKTMIRKRSFGNPF. 5 positions are modified to phosphoserine: Pro479, Ser495, Ser511, Thr522, and Ser572. Positions 497–588 are disordered; that stretch reads GNPFEGSRRE…LRPEEAMEPE (92 aa). Basic and acidic residues predominate over residues 521 to 536; that stretch reads PTRECESLSELKEARQ. Residues 579 to 588 show a composition bias toward basic and acidic residues; it reads LRPEEAMEPE.

It belongs to the protein kinase superfamily. Ser/Thr protein kinase family. As to quaternary structure, interacts with calmodulin. Post-translationally, autophosphorylated and phosphorylated by PKA. Each isoform may show a different pattern of phosphorylation. As to expression, ubiquitously expressed with higher levels in the brain. Intermediate levels are detected in spleen, prostate, thyroid and leukocytes. The lowest level is in lung.

Its subcellular location is the nucleus. The protein localises to the cytoplasm. The protein resides in the cell projection. It localises to the neuron projection. The catalysed reaction is L-seryl-[protein] + ATP = O-phospho-L-seryl-[protein] + ADP + H(+). The enzyme catalyses L-threonyl-[protein] + ATP = O-phospho-L-threonyl-[protein] + ADP + H(+). Its activity is regulated as follows. Activated by Ca(2+)/calmodulin. Binding of calmodulin may relieve intrasteric autoinhibition. Autophosphorylation does not alter activity or regulation by Ca(2+)/calmodulin. In part, activity is independent on Ca(2+)/calmodulin. Functionally, calcium/calmodulin-dependent protein kinase belonging to a proposed calcium-triggered signaling cascade involved in a number of cellular processes. Isoform 1, isoform 2 and isoform 3 phosphorylate CAMK1 and CAMK4. Isoform 3 phosphorylates CAMK1D. Isoform 4, isoform 5 and isoform 6 lacking part of the calmodulin-binding domain are inactive. Efficiently phosphorylates 5'-AMP-activated protein kinase (AMPK) trimer, including that consisting of PRKAA1, PRKAB1 and PRKAG1. This phosphorylation is stimulated in response to Ca(2+) signals. Seems to be involved in hippocampal activation of CREB1. May play a role in neurite growth. Isoform 3 may promote neurite elongation, while isoform 1 may promoter neurite branching. In Homo sapiens (Human), this protein is Calcium/calmodulin-dependent protein kinase kinase 2 (CAMKK2).